A 412-amino-acid polypeptide reads, in one-letter code: Poly-beta-1,6-N-acetyl-D-glucosamine synthase (412 aa).

Transmembrane regions (helical) follow at residues 7-28 (LLFYPIFMSIYWIVGSIYYFFI), 298-320 (IASITWVYIVICYLSFLVITANI), 332-354 (IFFFSSFTMTFINIIQFTVALFI), and 364-386 (VGLIFLSWYPTLYWVINAAVVIM).

This sequence belongs to the glycosyltransferase 2 family.

Its subcellular location is the cell membrane. Its function is as follows. N-acetylglucosaminyltransferase that catalyzes the polymerization of single monomer units of UDP-N-acetylglucosamine to produce the linear homomer poly-beta-1,6-N-acetyl-D-glucosamine (PNAG, also referred to as PIA), a biofilm adhesin polysaccharide. Requires IcaD for full activity. This Staphylococcus epidermidis protein is Poly-beta-1,6-N-acetyl-D-glucosamine synthase (icaA).